The primary structure comprises 222 residues: 4'-phosphopantetheinyl transferase Npt (222 aa).

The Mg(2+) site is built by D105, E107, and E147.

This sequence belongs to the P-Pant transferase superfamily. As to quaternary structure, monomer. Requires Mg(2+) as cofactor.

It carries out the reaction apo-[ACP] + CoA = holo-[ACP] + adenosine 3',5'-bisphosphate + H(+). In terms of biological role, catalyzes the transfer of the 4'-phosphopantetheine moiety from coenzyme A to a serine residue in the acyl-carrier domain of carboxylic acid reductase Car, thus converting apo-Car to fully active holo-Car. Is probably also responsible for the activation of other proteins with phosphopantetheine attachment sites. The chain is 4'-phosphopantetheinyl transferase Npt (npt) from Nocardia iowensis.